A 496-amino-acid polypeptide reads, in one-letter code: Xylulose kinase (496 aa).

A substrate-binding site is contributed by 83–84 (MH). The active-site Proton acceptor is Asp237.

The protein belongs to the FGGY kinase family.

It catalyses the reaction D-xylulose + ATP = D-xylulose 5-phosphate + ADP + H(+). Its function is as follows. Catalyzes the phosphorylation of D-xylulose to D-xylulose 5-phosphate. The polypeptide is Xylulose kinase (Staphylococcus epidermidis (strain ATCC 12228 / FDA PCI 1200)).